We begin with the raw amino-acid sequence, 39 residues long: uncharacterized protein (39 aa).

Residues 1–16 (MLNIQPTQSIVNNQPK) are compositionally biased toward polar residues. Residues 1 to 39 (MLNIQPTQSIVNNQPKSDQKKQKPADLLKEFYDKTGNRN) are disordered. A compositionally biased stretch (basic and acidic residues) spans 17–39 (SDQKKQKPADLLKEFYDKTGNRN).

This is an uncharacterized protein from Dictyostelium discoideum (Social amoeba).